The primary structure comprises 407 residues: Phosphopentomutase (407 aa).

The Mn(2+) site is built by Asp-10, Asp-306, His-311, Asp-347, His-348, and His-359.

It belongs to the phosphopentomutase family. Mn(2+) serves as cofactor.

Its subcellular location is the cytoplasm. It catalyses the reaction 2-deoxy-alpha-D-ribose 1-phosphate = 2-deoxy-D-ribose 5-phosphate. The catalysed reaction is alpha-D-ribose 1-phosphate = D-ribose 5-phosphate. The protein operates within carbohydrate degradation; 2-deoxy-D-ribose 1-phosphate degradation; D-glyceraldehyde 3-phosphate and acetaldehyde from 2-deoxy-alpha-D-ribose 1-phosphate: step 1/2. Isomerase that catalyzes the conversion of deoxy-ribose 1-phosphate (dRib-1-P) and ribose 1-phosphate (Rib-1-P) to deoxy-ribose 5-phosphate (dRib-5-P) and ribose 5-phosphate (Rib-5-P), respectively. The protein is Phosphopentomutase of Edwardsiella ictaluri (strain 93-146).